A 152-amino-acid polypeptide reads, in one-letter code: Large ribosomal subunit protein bL9 (152 aa).

It belongs to the bacterial ribosomal protein bL9 family.

Binds to the 23S rRNA. This chain is Large ribosomal subunit protein bL9, found in Synechococcus sp. (strain RCC307).